The following is a 992-amino-acid chain: RNA-binding motif protein, X-linked-like-3 (992 aa).

In terms of domain architecture, RRM spans 8–86; sequence EKLFVGGLNL…KAIMVAQTIK (79 aa). 7 disordered regions span residues 91–130, 144–169, 188–207, 278–385, 397–511, 562–588, and 644–992; these read SSRWVPPTPGSGSRSRFSHRTRGGGSSPQRPPSQGRPDDG, APMPRKRGPPPRHCASPPHKRRDPGD, PDYCPXRGDGNRNGYRGRDH, DHLP…DSSS, EEYQ…HRYR, SLDANSGGRSPNAYSGGHDSSSRSHRY, and NSGG…QSRY. A compositionally biased stretch (low complexity) spans 284 to 296; the sequence is YSGGRSSSSNSYS. Positions 297-316 are enriched in basic and acidic residues; it reads RSDRYGEEGCYEEYRGRSPD. Residues 318-334 show a composition bias toward low complexity; it reads HSGGRNSSSNSYGQSHH. Residues 335-371 show a composition bias toward basic and acidic residues; the sequence is YGGEGRYEEYRGRYEEYRGRSHEARSGGRSTDAHSGG. Positions 454–471 are enriched in low complexity; sequence THSGGRSSSSNSYGQSHR. Basic and acidic residues predominate over residues 472–488; that stretch reads YGGEGHYEYRGRSHDAH. 3 stretches are compositionally biased toward polar residues: residues 564-574, 644-664, and 752-774; these read DANSGGRSPNA, NSGGCSPNAYSGGHDSSSQSH, and DANSGGRSPNAYSGGRDSSSNSY. Residues 785-798 are compositionally biased toward basic and acidic residues; sequence HYEEYRGRSHDTHS. A compositionally biased stretch (polar residues) spans 818-828; the sequence is GRNSFSNSYGQ. Basic and acidic residues-rich tracts occupy residues 831 to 842, 920 to 948, and 981 to 992; these read HYGRGGRYEEYQ, SGDHDRSSNSYGRSDRYSRGRDRVGRPDR, and GRFERGEGQSRY.

The sequence is that of RNA-binding motif protein, X-linked-like-3 (RBMXL3) from Pan troglodytes (Chimpanzee).